Consider the following 1336-residue polypeptide: Vascular endothelial growth factor receptor 1 (1336 aa).

An N-terminal signal peptide occupies residues 1–22 (MVSCWDTAVLPCALLGCLLLTG). Topologically, residues 23 to 758 (YCSGSKLKGP…QGTSDKSNLE (736 aa)) are extracellular. 7 Ig-like C2-type domains span residues 32–121 (PELS…KKME), 151–214 (GREL…VNGH), 230–327 (LDVQ…TSVH), 335–421 (SVKH…LTAT), 429–549 (QIYE…RDIR), 556–655 (PNGF…EVLV), and 661–747 (PLLL…AYLT). Cystine bridges form between Cys-53–Cys-107 and Cys-158–Cys-207. Asn-100, Asn-164, Asn-196, and Asn-251 each carry an N-linked (GlcNAc...) asparagine glycan. Cys-252 and Cys-311 are disulfide-bonded. 8 N-linked (GlcNAc...) asparagine glycosylation sites follow: Asn-323, Asn-417, Asn-474, Asn-516, Asn-597, Asn-625, Asn-666, and Asn-713. Cystine bridges form between Cys-454–Cys-535 and Cys-577–Cys-636. A disulfide bridge links Cys-682 with Cys-731. A helical membrane pass occupies residues 759 to 780 (LITLTCTCVAATLFWLLLTLFI). At 781 to 1336 (RKLKRSSSEV…SVVLYSSPPA (556 aa)) the chain is on the cytoplasmic side. One can recognise a Protein kinase domain in the interval 827-1158 (LKLGKSLGRG…ELVEKLGDLL (332 aa)). Residues 833–841 (LGRGAFGKV) and Lys-861 contribute to the ATP site. Tyr-914 bears the Phosphotyrosine; by autocatalysis mark. A compositionally biased stretch (basic and acidic residues) spans 941–957 (KKEKLEPDLEQDQKPRL). The interval 941–982 (KKEKLEPDLEQDQKPRLDSVSSSESFTSSGFQEDKSVSDVEG) is disordered. The segment covering 959–969 (SVSSSESFTSS) has biased composition (low complexity). The Proton acceptor role is filled by Asp-1022. Phosphotyrosine; by autocatalysis occurs at positions 1053, 1169, 1213, 1242, 1325, and 1331. Positions 1304–1326 (RQEDEDDPELGKESCCSPPPDYN) are disordered.

The protein belongs to the protein kinase superfamily. Tyr protein kinase family. CSF-1/PDGF receptor subfamily. As to quaternary structure, interacts with VEGFA, VEGFB and PGF. Monomer in the absence of bound VEGFA, VEGFB or PGF. Homodimer in the presence of bound VEGFA, VEGFB and PGF. Can also form a heterodimer with KDR. Interacts (tyrosine phosphorylated) with CBL, CRK, GRB2, NCK1, PIK3R1, PLCG, PSEN1 and PTPN11. Probably interacts with PTPRB. Interacts with RACK1. Identified in a complex with CBL and CD2AP. Post-translationally, N-glycosylated. In terms of processing, ubiquitinated after VEGFA-mediated autophosphorylation, leading to proteolytic degradation. Autophosphorylated on tyrosine residues upon ligand binding. Autophosphorylation occurs in trans, i.e. one subunit of the dimeric receptor phosphorylates tyrosine residues on the other subunit. Phosphorylation at Tyr-1169 is important for interaction with PLCG. Phosphorylation at Tyr-1213 is important for interaction with PIK3R1, PTPN11, GRB2, and PLCG. Phosphorylation at Tyr-1331 is important for endocytosis and for interaction with CBL, NCK1 and CRK. Is probably dephosphorylated by PTPRB.

It localises to the cell membrane. The protein localises to the endosome. It carries out the reaction L-tyrosyl-[protein] + ATP = O-phospho-L-tyrosyl-[protein] + ADP + H(+). Its activity is regulated as follows. Present in an inactive conformation in the absence of bound ligand. Binding of VEGFA, VEGFB or PGF leads to dimerization and activation by autophosphorylation on tyrosine residues. In terms of biological role, tyrosine-protein kinase that acts as a cell-surface receptor for VEGFA, VEGFB and PGF, and plays an essential role in the development of embryonic vasculature, the regulation of angiogenesis, cell survival, cell migration, macrophage function, chemotaxis, and cancer cell invasion. Acts as a positive regulator of postnatal retinal hyaloid vessel regression. May play an essential role as a negative regulator of embryonic angiogenesis by inhibiting excessive proliferation of endothelial cells. Can promote endothelial cell proliferation, survival and angiogenesis in adulthood. Its function in promoting cell proliferation seems to be cell-type specific. Promotes PGF-mediated proliferation of endothelial cells, and proliferation of some types of cancer cells, but does not promote proliferation of normal fibroblasts. Has very high affinity for VEGFA and relatively low protein kinase activity; may function as a negative regulator of VEGFA signaling by limiting the amount of free VEGFA and preventing its binding to KDR. Modulates KDR signaling by forming heterodimers with KDR. Ligand binding leads to the activation of several signaling cascades. Activation of PLCG leads to the production of the cellular signaling molecules diacylglycerol and inositol 1,4,5-trisphosphate and the activation of protein kinase C. Mediates phosphorylation of PIK3R1, the regulatory subunit of phosphatidylinositol 3-kinase, leading to the activation of phosphatidylinositol kinase and the downstream signaling pathway. Mediates activation of MAPK1/ERK2, MAPK3/ERK1 and the MAP kinase signaling pathway, as well as of the AKT1 signaling pathway. Phosphorylates SRC, YES1 and PLCG, and may also phosphorylate CBL. Promotes phosphorylation of AKT1 and PTK2/FAK1. This Rattus norvegicus (Rat) protein is Vascular endothelial growth factor receptor 1 (Flt1).